Here is a 506-residue protein sequence, read N- to C-terminus: Kynurenine 3-monooxygenase (506 aa).

The interval 153–175 (QETSLLPGEESEKDKKQNTEDED) is disordered. A compositionally biased stretch (basic and acidic residues) spans 162–171 (ESEKDKKQNT).

The protein belongs to the aromatic-ring hydroxylase family. KMO subfamily. The cofactor is FAD.

The protein resides in the mitochondrion outer membrane. It catalyses the reaction L-kynurenine + NADPH + O2 + H(+) = 3-hydroxy-L-kynurenine + NADP(+) + H2O. Its pathway is cofactor biosynthesis; NAD(+) biosynthesis; quinolinate from L-kynurenine: step 1/3. Its function is as follows. Catalyzes the hydroxylation of L-kynurenine (L-Kyn) to form 3-hydroxy-L-kynurenine (L-3OHKyn). Required for synthesis of quinolinic acid. This chain is Kynurenine 3-monooxygenase, found in Cryptococcus neoformans var. neoformans serotype D (strain B-3501A) (Filobasidiella neoformans).